The sequence spans 280 residues: Divalent cation/proton antiporter GDT1 (280 aa).

Residues 1–3 (MGN) lie on the Cytoplasmic side of the membrane. Residues 4–24 (MIKKASLIALLPLFTAAAAAA) traverse the membrane as a helical segment. Over 25–45 (TDAETSMESGSSSHLKSFLMS) the chain is Vacuolar. A helical transmembrane segment spans residues 46 to 66 (VSMIGLSEIGDKTFLIAALMA). The Cytoplasmic segment spans residues 67–71 (MRHKR). Residues 72 to 92 (VLVFSAAATSLAIMTILSGVV) form a helical membrane-spanning segment. Residues 93–104 (GHSAVAFLSERY) lie on the Vacuolar side of the membrane. The chain crosses the membrane as a helical span at residues 105-125 (TAFFAGILFLVFGYKLTMEGL). Topologically, residues 126 to 183 (EMSKDAGVEEEMAEVEEEIAIKDMNQDMDDVEKGGDTAYDKQLKNASIGKKIVHRIRE) are cytoplasmic. A helical membrane pass occupies residues 184–204 (LASFMFSPVWVQIFLMVFLGE). Over 205–222 (LGDRSQISIIAMATDSDY) the chain is Vacuolar. A helical transmembrane segment spans residues 223–243 (WYVIAGAVIGHAICSGLAVVG). Residues 244 to 255 (GKLLATRISIRT) are Cytoplasmic-facing. Residues 256 to 276 (ITLASSLLFFIFALMYIYQAF) form a helical membrane-spanning segment. Residues 277 to 280 (TTQD) lie on the Vacuolar side of the membrane.

The protein belongs to the GDT1 family.

It localises to the golgi apparatus. Its subcellular location is the cis-Golgi network membrane. It carries out the reaction Ca(2+)(in) + n H(+)(out) = Ca(2+)(out) + n H(+)(in). The catalysed reaction is Mn(2+)(in) + n H(+)(out) = Mn(2+)(out) + n H(+)(in). Its function is as follows. Divalent cation:proton antiporter that exchanges calcium or manganese ions for protons across the Golgi membrane. Mediates the reversible transport of calcium or manganese to the Golgi lumen driven by the proton gradient and possibly the membrane potential generated by V-ATPase. Provides calcium or manganese cofactors to resident Golgi enzymes and contributes to the maintenance of an acidic luminal Golgi pH required for proper functioning of the secretory pathway. The transport stoichiometry remains to be elucidated. In Saccharomyces cerevisiae (strain ATCC 204508 / S288c) (Baker's yeast), this protein is Divalent cation/proton antiporter GDT1.